The chain runs to 493 residues: MTELTNLTVAQIRDGHRAGDFSAVEVAEAFNANVAAAKALNAFIVETPDLAIEAAKAADADRAAGTLKPLSGVPIGMKDLFCTNGVQTTAASHMLEGFVPRYESTVSQKLWDAGAGMLGKLNLDQFAMGSSNETSYFGNVISPWRRNDGGNAALAPGGSSGGSSAAIAARLCPAATGTDTGGSIRQPAAFTGISGIKPTYGRCSRWGIVAFASSLDQAGPMARTVRDCAIMLENMAGFDPKDATSLDLPVPNWEAALSSDLRGKTVGIPREYRLEGIDPDIDAMWDAGIAMLKDAEAAVVEISLPHTKYALPAYYIIAPAEASSNLARYDGVRYGLRDLPQGAGLQDMYAATRAEGFGAEVKRRIMIGTYVLSAGFYDAYYTQAQKVRTLIARDFEAAFGSCDVILAPTAPSAAFGLGEKMADPLAMYLNDVFAVPASLAGLPAMSVPAALNREGLPLGLQIIGKPFDEQGVLNAGLAIEERAGFTARAEKWW.

Catalysis depends on charge relay system residues Lys-78 and Ser-159. The Acyl-ester intermediate role is filled by Ser-183.

It belongs to the amidase family. GatA subfamily. In terms of assembly, heterotrimer of A, B and C subunits.

The enzyme catalyses L-glutamyl-tRNA(Gln) + L-glutamine + ATP + H2O = L-glutaminyl-tRNA(Gln) + L-glutamate + ADP + phosphate + H(+). Its function is as follows. Allows the formation of correctly charged Gln-tRNA(Gln) through the transamidation of misacylated Glu-tRNA(Gln) in organisms which lack glutaminyl-tRNA synthetase. The reaction takes place in the presence of glutamine and ATP through an activated gamma-phospho-Glu-tRNA(Gln). In Sphingopyxis alaskensis (strain DSM 13593 / LMG 18877 / RB2256) (Sphingomonas alaskensis), this protein is Glutamyl-tRNA(Gln) amidotransferase subunit A.